A 203-amino-acid chain; its full sequence is dITP/XTP pyrophosphatase (203 aa).

A substrate-binding site is contributed by Thr-8–Lys-13. Mg(2+)-binding residues include Glu-41 and Asp-70. Asp-70 serves as the catalytic Proton acceptor. Substrate is bound by residues Ser-71, Phe-153–Asp-156, Lys-176, and His-181–Arg-182.

It belongs to the HAM1 NTPase family. As to quaternary structure, homodimer. It depends on Mg(2+) as a cofactor.

It catalyses the reaction XTP + H2O = XMP + diphosphate + H(+). The catalysed reaction is dITP + H2O = dIMP + diphosphate + H(+). It carries out the reaction ITP + H2O = IMP + diphosphate + H(+). Pyrophosphatase that catalyzes the hydrolysis of nucleoside triphosphates to their monophosphate derivatives, with a high preference for the non-canonical purine nucleotides XTP (xanthosine triphosphate), dITP (deoxyinosine triphosphate) and ITP. Seems to function as a house-cleaning enzyme that removes non-canonical purine nucleotides from the nucleotide pool, thus preventing their incorporation into DNA/RNA and avoiding chromosomal lesions. This chain is dITP/XTP pyrophosphatase, found in Listeria monocytogenes serotype 4b (strain F2365).